Reading from the N-terminus, the 101-residue chain is Protein Tat (101 aa).

Residues 1 to 24 are interaction with human CREBBP; it reads MEPVDPRLEPWKHPGSQPKTACTN. Positions 1 to 48 are transactivation; the sequence is MEPVDPRLEPWKHPGSQPKTACTNCYCKKCCFHCQVCFTKKALGISYG. Residues Cys22, Cys25, and Cys27 each coordinate Zn(2+). Residues 22–37 are cysteine-rich; that stretch reads CTNCYCKKCCFHCQVC. Lys28 carries the N6-acetyllysine; by host PCAF modification. Residues Cys30, His33, Cys34, and Cys37 each contribute to the Zn(2+) site. The tract at residues 38–48 is core; that stretch reads FTKKALGISYG. The segment at 47–101 is disordered; it reads YGRKKRRQRRRAHQDSQNHQASLSKQPSSQTRGDPTGPKEPKKEVEREAETDPLD. Residues 48–58 are compositionally biased toward basic residues; that stretch reads GRKKRRQRRRA. Positions 49-57 match the Nuclear localization signal, RNA-binding (TAR), and protein transduction motif; sequence RKKRRQRRR. Positions 49 to 86 are interaction with the host capping enzyme RNGTT; that stretch reads RKKRRQRRRAHQDSQNHQASLSKQPSSQTRGDPTGPKE. An N6-acetyllysine; by host EP300 and GCN5L2 mark is found at Lys50 and Lys51. An asymmetric dimethylarginine; by host PRMT6 mark is found at Arg52 and Arg53. Polar residues predominate over residues 61–79; it reads DSQNHQASLSKQPSSQTRG. A Glycyl lysine isopeptide (Lys-Gly) (interchain with G-Cter in ubiquitin) cross-link involves residue Lys71. The short motif at 78–80 is the Cell attachment site element; it reads RGD. Over residues 83 to 101 the composition is skewed to basic and acidic residues; sequence GPKEPKKEVEREAETDPLD.

This sequence belongs to the lentiviruses Tat family. As to quaternary structure, interacts with host CCNT1. Associates with the P-TEFb complex composed at least of Tat, P-TEFb (CDK9 and CCNT1), TAR RNA, RNA Pol II. Recruits the HATs CREBBP, TAF1/TFIID, EP300, PCAF and GCN5L2. Interacts with host KAT5/Tip60; this interaction targets the latter to degradation. Interacts with the host deacetylase SIRT1. Interacts with host capping enzyme RNGTT; this interaction stimulates RNGTT. Binds to host KDR, and to the host integrins ITGAV/ITGB3 and ITGA5/ITGB1. Interacts with host KPNB1/importin beta-1 without previous binding to KPNA1/importin alpha-1. Interacts with EIF2AK2. Interacts with host nucleosome assembly protein NAP1L1; this interaction may be required for the transport of Tat within the nucleus, since the two proteins interact at the nuclear rim. Interacts with host C1QBP/SF2P32; this interaction involves lysine-acetylated Tat. Interacts with the host chemokine receptors CCR2, CCR3 and CXCR4. Interacts with host DPP4/CD26; this interaction may trigger an anti-proliferative effect. Interacts with host LDLR. Interacts with the host extracellular matrix metalloproteinase MMP1. Interacts with host PRMT6; this interaction mediates Tat's methylation. Interacts with, and is ubiquitinated by MDM2/Hdm2. Interacts with host PSMC3 and HTATIP2. Interacts with STAB1; this interaction may overcome SATB1-mediated repression of IL2 and IL2RA (interleukin) in T cells by binding to the same domain than HDAC1. Interacts (when acetylated) with human CDK13, thereby increasing HIV-1 mRNA splicing and promoting the production of the doubly spliced HIV-1 protein Nef. Interacts with host TBP; this interaction modulates the activity of transcriptional pre-initiation complex. Interacts with host RELA. Interacts with host PLSCR1; this interaction negatively regulates Tat transactivation activity by altering its subcellular distribution. Asymmetrical arginine methylation by host PRMT6 seems to diminish the transactivation capacity of Tat and affects the interaction with host CCNT1. In terms of processing, acetylation by EP300, CREBBP, GCN5L2/GCN5 and PCAF regulates the transactivation activity of Tat. EP300-mediated acetylation of Lys-50 promotes dissociation of Tat from the TAR RNA through the competitive binding to PCAF's bromodomain. In addition, the non-acetylated Tat's N-terminus can also interact with PCAF. PCAF-mediated acetylation of Lys-28 enhances Tat's binding to CCNT1. Lys-50 is deacetylated by SIRT1. Post-translationally, polyubiquitination by host MDM2 does not target Tat to degradation, but activates its transactivation function and fosters interaction with CCNT1 and TAR RNA. Phosphorylated by EIF2AK2 on serine and threonine residues adjacent to the basic region important for TAR RNA binding and function. Phosphorylation of Tat by EIF2AK2 is dependent on the prior activation of EIF2AK2 by dsRNA.

Its subcellular location is the host nucleus. It is found in the host nucleolus. The protein localises to the host cytoplasm. The protein resides in the secreted. Functionally, transcriptional activator that increases RNA Pol II processivity, thereby increasing the level of full-length viral transcripts. Recognizes a hairpin structure at the 5'-LTR of the nascent viral mRNAs referred to as the transactivation responsive RNA element (TAR) and recruits the cyclin T1-CDK9 complex (P-TEFb complex) that will in turn hyperphosphorylate the RNA polymerase II to allow efficient elongation. The CDK9 component of P-TEFb and other Tat-activated kinases hyperphosphorylate the C-terminus of RNA Pol II that becomes stabilized and much more processive. Other factors such as HTATSF1/Tat-SF1, SUPT5H/SPT5, and HTATIP2 are also important for Tat's function. Besides its effect on RNA Pol II processivity, Tat induces chromatin remodeling of proviral genes by recruiting the histone acetyltransferases (HATs) CREBBP, EP300 and PCAF to the chromatin. This also contributes to the increase in proviral transcription rate, especially when the provirus integrates in transcriptionally silent region of the host genome. To ensure maximal activation of the LTR, Tat mediates nuclear translocation of NF-kappa-B by interacting with host RELA. Through its interaction with host TBP, Tat may also modulate transcription initiation. Tat can reactivate a latently infected cell by penetrating in it and transactivating its LTR promoter. In the cytoplasm, Tat is thought to act as a translational activator of HIV-1 mRNAs. Extracellular circulating Tat can be endocytosed by surrounding uninfected cells via the binding to several surface receptors such as CD26, CXCR4, heparan sulfate proteoglycans (HSPG) or LDLR. Neurons are rarely infected, but they internalize Tat via their LDLR. Through its interaction with nuclear HATs, Tat is potentially able to control the acetylation-dependent cellular gene expression. Modulates the expression of many cellular genes involved in cell survival, proliferation or in coding for cytokines or cytokine receptors. Tat plays a role in T-cell and neurons apoptosis. Tat induced neurotoxicity and apoptosis probably contribute to neuroAIDS. Circulating Tat also acts as a chemokine-like and/or growth factor-like molecule that binds to specific receptors on the surface of the cells, affecting many cellular pathways. In the vascular system, Tat binds to ITGAV/ITGB3 and ITGA5/ITGB1 integrins dimers at the surface of endothelial cells and competes with bFGF for heparin-binding sites, leading to an excess of soluble bFGF. The protein is Protein Tat of Homo sapiens (Human).